The chain runs to 249 residues: Ubiquinone biosynthesis O-methyltransferase (249 aa).

The disordered stretch occupies residues M1–D21. 4 residues coordinate S-adenosyl-L-methionine: R52, G72, D93, and M137.

Belongs to the methyltransferase superfamily. UbiG/COQ3 family.

The catalysed reaction is a 3-demethylubiquinol + S-adenosyl-L-methionine = a ubiquinol + S-adenosyl-L-homocysteine + H(+). The enzyme catalyses a 3-(all-trans-polyprenyl)benzene-1,2-diol + S-adenosyl-L-methionine = a 2-methoxy-6-(all-trans-polyprenyl)phenol + S-adenosyl-L-homocysteine + H(+). Its pathway is cofactor biosynthesis; ubiquinone biosynthesis. O-methyltransferase that catalyzes the 2 O-methylation steps in the ubiquinone biosynthetic pathway. The sequence is that of Ubiquinone biosynthesis O-methyltransferase from Sodalis glossinidius (strain morsitans).